We begin with the raw amino-acid sequence, 402 residues long: MSKEKIVLAYSGGLDTSIILKWLQTERNYDVVCFTADLGQGDEVEEARVKALNTGAVAAYALDLREEFVRDYVFPMMRSSALYEGYYLLGTSIARPLIAKKMVEIAEKEGAVAISHGATGKGNDQVRFEMSAYALKPDIVTVAPWRDWDFQGRADLEAFAREHGIPVPTTKKDPWSMDANMLHISYEGGPLEDPWTEPPTHMFKLTVNPEDAPSEAEYVEIEYVNGDPVSINGEQLSPAALLTKANEIAGRHGVGRIDLVENRFVGMKSRGVYETPGGTLLYHARRAVESLTLDREVLHQRDALGPKYAELVYNGFWFAPEREALQVYFDHVAKSVTGTARLKLYKGNCIVAGRKAERSLYDKDLVSFEAGGDYNQHDAGAFIKLNSLRMRVQKRVEDKGKK.

Residues 9 to 17 (AYSGGLDTS) and alanine 36 each bind ATP. Positions 87 and 92 each coordinate L-citrulline. Position 117 (glycine 117) interacts with ATP. 3 residues coordinate L-aspartate: threonine 119, asparagine 123, and aspartate 124. Position 123 (asparagine 123) interacts with L-citrulline. L-citrulline contacts are provided by arginine 127, serine 176, serine 185, glutamate 261, and tyrosine 273.

This sequence belongs to the argininosuccinate synthase family. Type 1 subfamily. In terms of assembly, homotetramer.

It is found in the cytoplasm. It carries out the reaction L-citrulline + L-aspartate + ATP = 2-(N(omega)-L-arginino)succinate + AMP + diphosphate + H(+). The protein operates within amino-acid biosynthesis; L-arginine biosynthesis; L-arginine from L-ornithine and carbamoyl phosphate: step 2/3. The polypeptide is Argininosuccinate synthase (Deinococcus radiodurans (strain ATCC 13939 / DSM 20539 / JCM 16871 / CCUG 27074 / LMG 4051 / NBRC 15346 / NCIMB 9279 / VKM B-1422 / R1)).